A 462-amino-acid polypeptide reads, in one-letter code: Siroheme synthase (462 aa).

Residues 1–203 (MQYFPIFVDT…GNNSKAEQMM (203 aa)) form a precorrin-2 dehydrogenase /sirohydrochlorin ferrochelatase region. NAD(+) is bound by residues 22–23 (EV) and 43–44 (PW). Ser-128 is subject to Phosphoserine. Residues 217-462 (GEVYLVGAGP…EKLNWFGADA (246 aa)) are uroporphyrinogen-III C-methyltransferase. Position 226 (Pro-226) interacts with S-adenosyl-L-methionine. Residue Asp-249 is the Proton acceptor of the active site. The Proton donor role is filled by Lys-271. Residues 302–304 (GGD), Ile-307, 332–333 (TA), Met-384, and Ala-413 contribute to the S-adenosyl-L-methionine site.

It in the N-terminal section; belongs to the precorrin-2 dehydrogenase / sirohydrochlorin ferrochelatase family. This sequence in the C-terminal section; belongs to the precorrin methyltransferase family.

It catalyses the reaction uroporphyrinogen III + 2 S-adenosyl-L-methionine = precorrin-2 + 2 S-adenosyl-L-homocysteine + H(+). It carries out the reaction precorrin-2 + NAD(+) = sirohydrochlorin + NADH + 2 H(+). The catalysed reaction is siroheme + 2 H(+) = sirohydrochlorin + Fe(2+). It functions in the pathway cofactor biosynthesis; adenosylcobalamin biosynthesis; precorrin-2 from uroporphyrinogen III: step 1/1. Its pathway is cofactor biosynthesis; adenosylcobalamin biosynthesis; sirohydrochlorin from precorrin-2: step 1/1. It participates in porphyrin-containing compound metabolism; siroheme biosynthesis; precorrin-2 from uroporphyrinogen III: step 1/1. The protein operates within porphyrin-containing compound metabolism; siroheme biosynthesis; siroheme from sirohydrochlorin: step 1/1. It functions in the pathway porphyrin-containing compound metabolism; siroheme biosynthesis; sirohydrochlorin from precorrin-2: step 1/1. In terms of biological role, multifunctional enzyme that catalyzes the SAM-dependent methylations of uroporphyrinogen III at position C-2 and C-7 to form precorrin-2 via precorrin-1. Then it catalyzes the NAD-dependent ring dehydrogenation of precorrin-2 to yield sirohydrochlorin. Finally, it catalyzes the ferrochelation of sirohydrochlorin to yield siroheme. The protein is Siroheme synthase of Pseudoalteromonas atlantica (strain T6c / ATCC BAA-1087).